Consider the following 684-residue polypeptide: MAEGEELLPLSTSGGDSWEKDLEEALEAGGCDLETLRNIIQGRPLPAELRAKVWKIALNVAGKGDSLASWDGILDLPEQNTIHKDCLEFIEQLSVPEEKAAELLLDIESVITFYCKSRSVKYSTSLSWIHLLKPLICLQLPRSDLYNCFYAVMNKYIPRDCSLKGRPFHLFRLLIQYHEPELCSFLDTKKITPDSYALNWLGSLFAHYCSTEVTQAIWDGYLQQADPFFIYFLMLIILVNTKEVILAQESDSKEEVIRFLESTPASLNLEDIEDLFSLAQYYCSKTPASFRKDNHHLFGSTLLGIKDDEADLSQALCLAVSVSEILQANQLQGEGVRFFVVDCRPAEQYNAGHLATAFHLDSDLMLQNPSEFAQSVKSLLEAQKQSIESGSIAGGEHLCFMGSGREEEDMYMNMVLAHFLQKNKEYVSIASGGFMALQQHLADINVEGPESGYGHWIASTSGSRGSISSVDGESCNGSNDRGMKSLVSKMTVALKTKSVTVREKVISFIENSSTPVDRHVSSSDRVGKPYRGVKPVFSIGDEEEYDTDEIDSSSMSDDDRKEVVNIQTWINKPDIKHHFPCKEVKESGHMFPSHLLVTATHMYCLREILSRKGLAYIQSRQALNSVVKITSKKKHPELITFKYGNSSASGIEILAIERYLIPNAGDATRAIKQQIMKVLDALES.

Residues 44-225 enclose the Rab-GAP TBC domain; the sequence is PLPAELRAKV…AIWDGYLQQA (182 aa). S300 is modified (phosphoserine). Residues 334–446 enclose the Rhodanese domain; that stretch reads EGVRFFVVDC…LQQHLADINV (113 aa). A phosphoserine mark is found at S469, S474, and S507. T514 carries the post-translational modification Phosphothreonine. Residues 514-558 form a may mediate the interaction with C17orf75, FAM91A1 and WDR11 region; sequence TPVDRHVSSSDRVGKPYRGVKPVFSIGDEEEYDTDEIDSSSMSDD. Residues 514–684 form a may mediate the interaction with WASHC1 region; that stretch reads TPVDRHVSSS…IMKVLDALES (171 aa). Position 556 is a phosphoserine (S556). Positions 559–684 are may mediate the interaction with FKBP15 and WASHC2; required for endosome to Golgi trafficking; sequence DRKEVVNIQT…IMKVLDALES (126 aa).

As to quaternary structure, directly interacts with GOLGA1 and GOLGA4. Interacts with FAM91A1, C17ORF75 and WDR11; the interaction recruits TBC1D23 to AP-1-derived vesicles. Directly interacts with WASHC1 and WASHC2/FAM21. Interacts with FKBP15.

The protein resides in the golgi apparatus. It is found in the trans-Golgi network. It localises to the cytoplasmic vesicle. In terms of biological role, putative Rab GTPase-activating protein which plays a role in vesicular trafficking. Involved in endosome-to-Golgi trafficking. Acts as a bridging protein by binding simultaneously to golgins, including GOLGA1 and GOLGA4, located at the trans-Golgi, and to the WASH complex, located on endosome-derived vesicles. Together with WDR11 complex facilitates the golgin-mediated capture of vesicles generated using AP-1. Plays a role in brain development, including in cortical neuron positioning. May also be important for neurite outgrowth, possibly through its involvement in membrane trafficking and cargo delivery, 2 processes which are essential for axonal and dendritic growth. May act as a general inhibitor of innate immunity signaling, strongly inhibiting multiple TLR and dectin/CLEC7A-signaling pathways. Does not alter initial activation events, but instead affects maintenance of inflammatory gene expression several hours after bacterial lipopolysaccharide (LPS) challenge. The chain is TBC1 domain family member 23 (Tbc1d23) from Mus musculus (Mouse).